A 681-amino-acid polypeptide reads, in one-letter code: MNDLKPATSYRSTSLHDAVKLRLDEPSSFSQTVPPQTIPEFFKESCEKYSDLPALVWETPGSGNDGWTTLTFGEYQERVEQAALMLLSVGVEERSSVGILAFNCPEWFFAEFGALRAGAVVAGVYPSNSAEAVHHVLATGESSVCVVDDAQQMAKLRAIKERLPRLKAVIQLHGPFEAFVDHEPGYFSWQKLQEQTFSSELKEELLARESRIRANECAMLIFTSGTVGMPKAVMLSHDNLVFDTKSAAAHMQDIQVGKESFVSYLPLSHVAAQIFDVFLGLSHAGCVTFADKDALKGTLIKTFRKARPTKMFGVPRVFEKLQERLVAAEAKARPYSRLLLARARAAVAEHQTTLMAGKSPSIYGNAKYWLACRVVKPIREMIGVDNCRVFFTGGAPTSEELKQFFLGLDIALGECYGMSETSGAITLNVDISNLYSAGQACEGVTLKIHEPDCNGQGEILMRGRLVFMGYLGLPDKTEETVKEDGWLHSGDLGYIDPKGNLIISGRLKELIITAGGENIPPVHIEELIKKELPCVSNVLLIGDHRKYLTVLLSLKTKCDAKTGIPLDALREETIEWLRDLDIHETRLSELLNIPADLQLPNDTAALAATLEITAKPKLLEAIEEGIKRANKYAISNAQKVQKFALIAHEFSVATGELGPTLKIRRNIVHAKYAKVIERLYK.

ATP is bound by residues 223-231 (TSGTVGMPK), 414-419 (ECYGMS), Asp491, Arg506, and Lys639.

This sequence belongs to the ATP-dependent AMP-binding enzyme family. Bubblegum subfamily.

It catalyses the reaction a long-chain fatty acid + ATP + CoA = a long-chain fatty acyl-CoA + AMP + diphosphate. In terms of biological role, mediates activation of long-chain fatty acids for both synthesis of cellular lipids, and degradation via beta-oxidation. Probably by regulating lipid storage and catabolism, plays a role in neuronal function. This is Long-chain-fatty-acid--CoA ligase heimdall from Drosophila melanogaster (Fruit fly).